We begin with the raw amino-acid sequence, 408 residues long: UPF0754 membrane protein Tery_3973 (408 aa).

The next 2 membrane-spanning stretches (helical) occupy residues 4-24 (IWLYFVPPIAGGIIGYFTNDI) and 385-405 (IVNLGGVLGVVVGSFQTILLV).

The protein belongs to the UPF0754 family.

The protein localises to the cell inner membrane. In Trichodesmium erythraeum (strain IMS101), this protein is UPF0754 membrane protein Tery_3973.